The chain runs to 580 residues: MTASGALQPALYLAVLIGLSVPLGTYMARVYQGERGLMASVLGPLERLAYRAAGVRPDQEMRWKDYAFAVLAFNLAGLLVLYALQRLQGVLPLNPEGMAAVPPDLAFNTAASFASNTNWQAYGGESTLSYLTQMAGLGVQNFVSAATGMAVLVALIRGITRKTADTVGSFWVDLVRSTLYILLPLSLLLAVLLVSQGVVQGFGGHQSASLLQAVKDQGGSAVVEQVIPMGPAASQIAIKQLGTNGGGFFNVNSAHPLENPTALSNFLEMLAILLIPAALCHTFGRMVGDRRQGWAVLAAMTAIFAVLLVACVASEQAGNPALSALGVDQAASALQAGGNMEGKEARFGITSSALWATATTAASNGSVNAMHDSFTPLGGLVPLWLMQLGEVVFGGVGSGLYGMLMFVVIAVFVAGLMVGRTPEYLGKKIEAFEMKMASLVVLFPAITVLVGTAIAVTTEGGQKGVFNPGPHGFSEVLYAFSSGANNNGSAFGGLGANSPFYNTAIGVAMLVGRYAVIVPVLALAGSLARKKLVPAGPGTLPTHTPLFVGLLTGTVLLVGALTFVPALALGPVVEHLEMTR.

The next 10 helical transmembrane spans lie at 3 to 23 (ASGALQPALYLAVLIGLSVPL), 65 to 85 (DYAFAVLAFNLAGLLVLYALQ), 136 to 156 (GLGVQNFVSAATGMAVLVALI), 179 to 199 (LYILLPLSLLLAVLLVSQGVV), 263 to 283 (LSNFLEMLAILLIPAALCHTF), 293 to 313 (GWAVLAAMTAIFAVLLVACVA), 399 to 419 (GLYGMLMFVVIAVFVAGLMVG), 436 to 456 (MASLVVLFPAITVLVGTAIAV), 504 to 524 (AIGVAMLVGRYAVIVPVLALA), and 546 to 566 (LFVGLLTGTVLLVGALTFVPA).

Belongs to the KdpA family. As to quaternary structure, the system is composed of three essential subunits: KdpA, KdpB and KdpC.

Its subcellular location is the cell inner membrane. Part of the high-affinity ATP-driven potassium transport (or Kdp) system, which catalyzes the hydrolysis of ATP coupled with the electrogenic transport of potassium into the cytoplasm. This subunit binds the periplasmic potassium ions and delivers the ions to the membrane domain of KdpB through an intramembrane tunnel. The protein is Potassium-transporting ATPase potassium-binding subunit of Sorangium cellulosum (strain So ce56) (Polyangium cellulosum (strain So ce56)).